The chain runs to 181 residues: Large ribosomal subunit protein uL6 (181 aa).

This sequence belongs to the universal ribosomal protein uL6 family. As to quaternary structure, part of the 50S ribosomal subunit.

Functionally, this protein binds to the 23S rRNA, and is important in its secondary structure. It is located near the subunit interface in the base of the L7/L12 stalk, and near the tRNA binding site of the peptidyltransferase center. The polypeptide is Large ribosomal subunit protein uL6 (Lawsonia intracellularis (strain PHE/MN1-00)).